Consider the following 156-residue polypeptide: Small ribosomal subunit protein uS7 (156 aa).

The protein belongs to the universal ribosomal protein uS7 family. In terms of assembly, part of the 30S ribosomal subunit. Contacts proteins S9 and S11.

In terms of biological role, one of the primary rRNA binding proteins, it binds directly to 16S rRNA where it nucleates assembly of the head domain of the 30S subunit. Is located at the subunit interface close to the decoding center, probably blocks exit of the E-site tRNA. This Campylobacter fetus subsp. fetus (strain 82-40) protein is Small ribosomal subunit protein uS7.